The sequence spans 914 residues: Valine--tRNA ligase (914 aa).

Residues 45 to 55 carry the 'HIGH' region motif; it reads PNVTGSLHMGH. The 'KMSKS' region motif lies at 538–542; the sequence is KMSKS. Lysine 541 is an ATP binding site. Residues 847–914 are a coiled coil; sequence LVDLDALKGR…LARKRLADLS (68 aa).

Belongs to the class-I aminoacyl-tRNA synthetase family. ValS type 1 subfamily. Monomer.

The protein resides in the cytoplasm. The enzyme catalyses tRNA(Val) + L-valine + ATP = L-valyl-tRNA(Val) + AMP + diphosphate. In terms of biological role, catalyzes the attachment of valine to tRNA(Val). As ValRS can inadvertently accommodate and process structurally similar amino acids such as threonine, to avoid such errors, it has a 'posttransfer' editing activity that hydrolyzes mischarged Thr-tRNA(Val) in a tRNA-dependent manner. This is Valine--tRNA ligase from Parasynechococcus marenigrum (strain WH8102).